The chain runs to 322 residues: Quinolinate synthase (322 aa).

Residues His-38 and Ser-55 each coordinate iminosuccinate. Residue Cys-100 coordinates [4Fe-4S] cluster. Iminosuccinate contacts are provided by residues 126-128 (YIN) and Ser-143. Residue Cys-186 participates in [4Fe-4S] cluster binding. Iminosuccinate contacts are provided by residues 212-214 (HPE) and Thr-229. Cys-279 is a [4Fe-4S] cluster binding site.

The protein belongs to the quinolinate synthase family. Type 2 subfamily. It depends on [4Fe-4S] cluster as a cofactor.

The protein localises to the cytoplasm. It catalyses the reaction iminosuccinate + dihydroxyacetone phosphate = quinolinate + phosphate + 2 H2O + H(+). Its pathway is cofactor biosynthesis; NAD(+) biosynthesis; quinolinate from iminoaspartate: step 1/1. Functionally, catalyzes the condensation of iminoaspartate with dihydroxyacetone phosphate to form quinolinate. The protein is Quinolinate synthase of Cyanothece sp. (strain PCC 7425 / ATCC 29141).